Consider the following 753-residue polypeptide: 5-methyltetrahydropteroyltriglutamate--homocysteine methyltransferase (753 aa).

5-methyltetrahydropteroyltri-L-glutamate contacts are provided by residues Arg17–Lys20 and Lys117. L-homocysteine is bound by residues Ile431–Ser433 and Glu484. Residues Ile431–Ser433 and Glu484 contribute to the L-methionine site. Residues Arg515–Cys516 and Trp561 contribute to the 5-methyltetrahydropteroyltri-L-glutamate site. Asp599 provides a ligand contact to L-homocysteine. L-methionine is bound at residue Asp599. Glu605 is a binding site for 5-methyltetrahydropteroyltri-L-glutamate. The Zn(2+) site is built by His641, Cys643, and Glu665. His694 acts as the Proton donor in catalysis. Residue Cys726 coordinates Zn(2+).

This sequence belongs to the vitamin-B12 independent methionine synthase family. Zn(2+) is required as a cofactor.

The enzyme catalyses 5-methyltetrahydropteroyltri-L-glutamate + L-homocysteine = tetrahydropteroyltri-L-glutamate + L-methionine. It participates in amino-acid biosynthesis; L-methionine biosynthesis via de novo pathway; L-methionine from L-homocysteine (MetE route): step 1/1. Its function is as follows. Catalyzes the transfer of a methyl group from 5-methyltetrahydrofolate to homocysteine resulting in methionine formation. In Escherichia coli O9:H4 (strain HS), this protein is 5-methyltetrahydropteroyltriglutamate--homocysteine methyltransferase.